The following is a 454-amino-acid chain: MTQLSVVILAAGKGTRMYSDLPKVLHTVAGKPMVQHVIDTAKQIDAKQIHLIYGHGGELLQQRLSSEPVNWVLQAEQLGTGHAMQQAAPFFADDENILMLYGDAPLITKETLERLIAAKPENGIALLTVELENPTGYGRIIRENGSVVAIVEQKDANAEQLKIREVNTGVMVASGASFKKWLANLNNNNAQGEYYITDVIAMANQDGYKVQAVQASEFMEVEGANNRLQLAALERFYQKTQAEKLLLAGVRLIDQARFDIRGSLTHGKDVEIDVNVIIEGEVKLGNRVRIGAGCVLKNCEIGDDVEIKPYSVIEDAVVGKAAQIGPFSRLRPGANLAEETHVGNFVEIKNAQVGKGSKVNHLTYVGDAEVGSNCNIGAGVITCNYDGANKFKTIIGNNVFVGSDSQLVAPVTIADGATIGAGATVTKDVAENELVISRVPQRHIQGWQRPTKKK.

The segment at 1–227 (MTQLSVVILA…FMEVEGANNR (227 aa)) is pyrophosphorylase. UDP-N-acetyl-alpha-D-glucosamine is bound by residues 9 to 12 (LAAG), Lys-23, Gln-74, 79 to 80 (GT), 101 to 103 (YGD), Gly-138, Glu-152, Asn-167, and Asn-225. Position 103 (Asp-103) interacts with Mg(2+). Mg(2+) is bound at residue Asn-225. Residues 228 to 248 (LQLAALERFYQKTQAEKLLLA) are linker. The interval 249-454 (GVRLIDQARF…QGWQRPTKKK (206 aa)) is N-acetyltransferase. UDP-N-acetyl-alpha-D-glucosamine is bound by residues Arg-331 and Lys-349. The active-site Proton acceptor is the His-361. 2 residues coordinate UDP-N-acetyl-alpha-D-glucosamine: Tyr-364 and Asn-375. Acetyl-CoA contacts are provided by residues Ala-378, 384-385 (NY), Ser-403, Ala-421, and Arg-438.

The protein in the N-terminal section; belongs to the N-acetylglucosamine-1-phosphate uridyltransferase family. In the C-terminal section; belongs to the transferase hexapeptide repeat family. Homotrimer. It depends on Mg(2+) as a cofactor.

It is found in the cytoplasm. It catalyses the reaction alpha-D-glucosamine 1-phosphate + acetyl-CoA = N-acetyl-alpha-D-glucosamine 1-phosphate + CoA + H(+). It carries out the reaction N-acetyl-alpha-D-glucosamine 1-phosphate + UTP + H(+) = UDP-N-acetyl-alpha-D-glucosamine + diphosphate. It participates in nucleotide-sugar biosynthesis; UDP-N-acetyl-alpha-D-glucosamine biosynthesis; N-acetyl-alpha-D-glucosamine 1-phosphate from alpha-D-glucosamine 6-phosphate (route II): step 2/2. The protein operates within nucleotide-sugar biosynthesis; UDP-N-acetyl-alpha-D-glucosamine biosynthesis; UDP-N-acetyl-alpha-D-glucosamine from N-acetyl-alpha-D-glucosamine 1-phosphate: step 1/1. Its pathway is bacterial outer membrane biogenesis; LPS lipid A biosynthesis. In terms of biological role, catalyzes the last two sequential reactions in the de novo biosynthetic pathway for UDP-N-acetylglucosamine (UDP-GlcNAc). The C-terminal domain catalyzes the transfer of acetyl group from acetyl coenzyme A to glucosamine-1-phosphate (GlcN-1-P) to produce N-acetylglucosamine-1-phosphate (GlcNAc-1-P), which is converted into UDP-GlcNAc by the transfer of uridine 5-monophosphate (from uridine 5-triphosphate), a reaction catalyzed by the N-terminal domain. The polypeptide is Bifunctional protein GlmU (Actinobacillus pleuropneumoniae serotype 7 (strain AP76)).